We begin with the raw amino-acid sequence, 54 residues long: ATP synthase F(0) complex subunit 8 (54 aa).

The chain crosses the membrane as a helical span at residues 4 to 24; it reads LNPGPWFAILVFSWLIFLTII. The disordered stretch occupies residues 35 to 54; sequence NEPTPVSAEKHKTESWDWPW. Basic and acidic residues predominate over residues 42–54; it reads AEKHKTESWDWPW.

The protein belongs to the ATPase protein 8 family. Component of the ATP synthase complex composed at least of ATP5F1A/subunit alpha, ATP5F1B/subunit beta, ATP5MC1/subunit c (homooctomer), MT-ATP6/subunit a, MT-ATP8/subunit 8, ATP5ME/subunit e, ATP5MF/subunit f, ATP5MG/subunit g, ATP5MK/subunit k, ATP5MJ/subunit j, ATP5F1C/subunit gamma, ATP5F1D/subunit delta, ATP5F1E/subunit epsilon, ATP5PF/subunit F6, ATP5PB/subunit b, ATP5PD/subunit d, ATP5PO/subunit OSCP. ATP synthase complex consists of a soluble F(1) head domain (subunits alpha(3) and beta(3)) - the catalytic core - and a membrane F(0) domain - the membrane proton channel (subunits c, a, 8, e, f, g, k and j). These two domains are linked by a central stalk (subunits gamma, delta, and epsilon) rotating inside the F1 region and a stationary peripheral stalk (subunits F6, b, d, and OSCP).

It is found in the mitochondrion membrane. Its function is as follows. Subunit 8, of the mitochondrial membrane ATP synthase complex (F(1)F(0) ATP synthase or Complex V) that produces ATP from ADP in the presence of a proton gradient across the membrane which is generated by electron transport complexes of the respiratory chain. ATP synthase complex consist of a soluble F(1) head domain - the catalytic core - and a membrane F(1) domain - the membrane proton channel. These two domains are linked by a central stalk rotating inside the F(1) region and a stationary peripheral stalk. During catalysis, ATP synthesis in the catalytic domain of F(1) is coupled via a rotary mechanism of the central stalk subunits to proton translocation. In vivo, can only synthesize ATP although its ATP hydrolase activity can be activated artificially in vitro. Part of the complex F(0) domain. The polypeptide is ATP synthase F(0) complex subunit 8 (Cyprinus carpio (Common carp)).